The sequence spans 1381 residues: Hepatocyte growth factor receptor (1381 aa).

A signal peptide spans methionine 1 to glycine 24. Residues glutamate 25 to leucine 934 lie on the Extracellular side of the membrane. The Sema domain occupies lysine 27 to leucine 515. Asparagine 45 carries N-linked (GlcNAc...) asparagine glycosylation. 4 disulfide bridges follow: cysteine 95/cysteine 101, cysteine 98/cysteine 160, cysteine 133/cysteine 141, and cysteine 172/cysteine 175. The N-linked (GlcNAc...) asparagine glycan is linked to asparagine 106. N-linked (GlcNAc...) asparagine glycans are attached at residues asparagine 202 and asparagine 358. Intrachain disulfides connect cysteine 298-cysteine 363 and cysteine 385-cysteine 397. Residues asparagine 399, asparagine 405, and asparagine 449 are each glycosylated (N-linked (GlcNAc...) asparagine). Intrachain disulfides connect cysteine 520–cysteine 538, cysteine 526–cysteine 561, cysteine 529–cysteine 545, and cysteine 541–cysteine 551. An N-linked (GlcNAc...) asparagine glycan is attached at asparagine 553. IPT/TIG domains follow at residues proline 563–valine 655, proline 657–arginine 739, and proline 742–valine 836. Threonine 582 carries O-linked (Man) threonine glycosylation. N-linked (GlcNAc...) asparagine glycans are attached at residues asparagine 607 and asparagine 635. 2 O-linked (Man) threonine glycosylation sites follow: threonine 676 and threonine 761. N-linked (GlcNAc...) asparagine glycans are attached at residues asparagine 785, asparagine 879, and asparagine 930. A helical membrane pass occupies residues isoleucine 935–leucine 955. Residues lysine 956–threonine 1381 lie on the Cytoplasmic side of the membrane. The residue at position 966 (serine 966) is a Phosphoserine. Threonine 977 is subject to Phosphothreonine. Phosphoserine is present on residues serine 990, serine 997, and serine 1000. Tyrosine 1003 bears the Phosphotyrosine mark. Residues valine 1078–isoleucine 1345 enclose the Protein kinase domain. ATP contacts are provided by residues isoleucine 1084 to valine 1092 and lysine 1110. Catalysis depends on aspartate 1204, which acts as the Proton acceptor. The interaction with RANBP9 stretch occupies residues leucine 1212 to threonine 1381. Tyrosine 1230 is modified (phosphotyrosine). Residues tyrosine 1234 and tyrosine 1235 each carry the phosphotyrosine; by autocatalysis modification. Phosphothreonine is present on threonine 1289. An interaction with MUC20 region spans residues tryptophan 1320–valine 1359. Residues tyrosine 1349 and tyrosine 1356 each carry the phosphotyrosine; by autocatalysis modification. Tyrosine 1365 bears the Phosphotyrosine mark.

This sequence belongs to the protein kinase superfamily. Tyr protein kinase family. In terms of assembly, heterodimer made of an alpha chain (50 kDa) and a beta chain (145 kDa) which are disulfide linked. Binds PLXNB1. Interacts when phosphorylated with downstream effectors including STAT3, PIK3R1, SRC, PCLG1, GRB2 and GAB1. Interacts with SPSB1, SPSB2 and SPSB4. Interacts with INPP5D/SHIP1. When phosphorylated at Tyr-1356, interacts with INPPL1/SHIP2. Interacts with RANBP9 and RANBP10, as well as SPSB1, SPSB2, SPSB3 and SPSB4. SPSB1 binding occurs in the presence and in the absence of HGF, however HGF treatment has a positive effect on this interaction. Interacts with MUC20; prevents interaction with GRB2 and suppresses hepatocyte growth factor-induced cell proliferation. Interacts with GRB10. Interacts with PTPN1 and PTPN2. Interacts with HSP90AA1 and HSP90AB1; the interaction suppresses MET kinase activity. Interacts with tensin TNS3. Interacts (when phosphorylated) with tensin TNS4 (via SH2 domain); the interaction increases MET protein stability by inhibiting MET endocytosis and subsequent lysosomal degradation. In terms of processing, autophosphorylated in response to ligand binding on Tyr-1234 and Tyr-1235 in the kinase domain leading to further phosphorylation of Tyr-1349 and Tyr-1356 in the C-terminal multifunctional docking site. Dephosphorylated by PTPRJ at Tyr-1349 and Tyr-1365. Dephosphorylated by PTPN1 and PTPN2. Post-translationally, ubiquitinated. Ubiquitination by CBL regulates the receptor stability and activity through proteasomal degradation. O-mannosylation of IPT/TIG domains by TMEM260 is required for protein maturation. O-mannosylated residues are composed of single mannose glycans that are not elongated or modified.

It localises to the membrane. The catalysed reaction is L-tyrosyl-[protein] + ATP = O-phospho-L-tyrosyl-[protein] + ADP + H(+). With respect to regulation, in its inactive state, the C-terminal tail interacts with the catalytic domain and inhibits the kinase activity. Upon ligand binding, the C-terminal tail is displaced and becomes phosphorylated, thus increasing the kinase activity. Functionally, receptor tyrosine kinase that transduces signals from the extracellular matrix into the cytoplasm by binding to hepatocyte growth factor/HGF ligand. Regulates many physiological processes including proliferation, scattering, morphogenesis and survival. Ligand binding at the cell surface induces autophosphorylation of MET on its intracellular domain that provides docking sites for downstream signaling molecules. Following activation by ligand, interacts with the PI3-kinase subunit PIK3R1, PLCG1, SRC, GRB2, STAT3 or the adapter GAB1. Recruitment of these downstream effectors by MET leads to the activation of several signaling cascades including the RAS-ERK, PI3 kinase-AKT, or PLCgamma-PKC. The RAS-ERK activation is associated with the morphogenetic effects while PI3K/AKT coordinates prosurvival effects. During embryonic development, MET signaling plays a role in gastrulation, development and migration of muscles and neuronal precursors, angiogenesis and kidney formation. In adults, participates in wound healing as well as organ regeneration and tissue remodeling. Also promotes differentiation and proliferation of hematopoietic cells. This Equus caballus (Horse) protein is Hepatocyte growth factor receptor (MET).